The chain runs to 423 residues: Serine--tRNA ligase (423 aa).

231 to 233 contributes to the L-serine binding site; the sequence is TGE. 262 to 264 serves as a coordination point for ATP; it reads RSE. Glu285 is an L-serine binding site. 349-352 contributes to the ATP binding site; the sequence is EISS. Ser385 contacts L-serine.

It belongs to the class-II aminoacyl-tRNA synthetase family. Type-1 seryl-tRNA synthetase subfamily. In terms of assembly, homodimer. The tRNA molecule binds across the dimer.

The protein localises to the cytoplasm. The enzyme catalyses tRNA(Ser) + L-serine + ATP = L-seryl-tRNA(Ser) + AMP + diphosphate + H(+). The catalysed reaction is tRNA(Sec) + L-serine + ATP = L-seryl-tRNA(Sec) + AMP + diphosphate + H(+). It functions in the pathway aminoacyl-tRNA biosynthesis; selenocysteinyl-tRNA(Sec) biosynthesis; L-seryl-tRNA(Sec) from L-serine and tRNA(Sec): step 1/1. Catalyzes the attachment of serine to tRNA(Ser). Is also able to aminoacylate tRNA(Sec) with serine, to form the misacylated tRNA L-seryl-tRNA(Sec), which will be further converted into selenocysteinyl-tRNA(Sec). The chain is Serine--tRNA ligase from Coxiella burnetii (strain CbuK_Q154) (Coxiella burnetii (strain Q154)).